A 231-amino-acid polypeptide reads, in one-letter code: Protein RhiA (231 aa).

May be involved in plant-microbe interaction. The sequence is that of Protein RhiA (rhiA) from Rhizobium leguminosarum bv. viciae.